The chain runs to 289 residues: Ribosomal RNA small subunit methyltransferase A (289 aa).

Residues Asn28, Leu30, Gly55, Glu76, Asp101, and Asn125 each coordinate S-adenosyl-L-methionine.

It belongs to the class I-like SAM-binding methyltransferase superfamily. rRNA adenine N(6)-methyltransferase family. RsmA subfamily.

The protein resides in the cytoplasm. It catalyses the reaction adenosine(1518)/adenosine(1519) in 16S rRNA + 4 S-adenosyl-L-methionine = N(6)-dimethyladenosine(1518)/N(6)-dimethyladenosine(1519) in 16S rRNA + 4 S-adenosyl-L-homocysteine + 4 H(+). Functionally, specifically dimethylates two adjacent adenosines (A1518 and A1519) in the loop of a conserved hairpin near the 3'-end of 16S rRNA in the 30S particle. May play a critical role in biogenesis of 30S subunits. This chain is Ribosomal RNA small subunit methyltransferase A, found in Clostridioides difficile (strain 630) (Peptoclostridium difficile).